We begin with the raw amino-acid sequence, 306 residues long: UDP-3-O-acyl-N-acetylglucosamine deacetylase (306 aa).

Residues His79, His238, and Asp242 each contribute to the Zn(2+) site. His265 serves as the catalytic Proton donor.

It belongs to the LpxC family. Requires Zn(2+) as cofactor.

The catalysed reaction is a UDP-3-O-[(3R)-3-hydroxyacyl]-N-acetyl-alpha-D-glucosamine + H2O = a UDP-3-O-[(3R)-3-hydroxyacyl]-alpha-D-glucosamine + acetate. It participates in glycolipid biosynthesis; lipid IV(A) biosynthesis; lipid IV(A) from (3R)-3-hydroxytetradecanoyl-[acyl-carrier-protein] and UDP-N-acetyl-alpha-D-glucosamine: step 2/6. Functionally, catalyzes the hydrolysis of UDP-3-O-myristoyl-N-acetylglucosamine to form UDP-3-O-myristoylglucosamine and acetate, the committed step in lipid A biosynthesis. This Hamiltonella defensa subsp. Acyrthosiphon pisum (strain 5AT) protein is UDP-3-O-acyl-N-acetylglucosamine deacetylase.